Consider the following 1140-residue polypeptide: Probable DNA-directed RNA polymerase II subunit RPB2 homolog (1140 aa).

Residue Asp773 coordinates Mg(2+). Positions 1092, 1095, 1105, and 1108 each coordinate Zn(2+). The C4-type zinc-finger motif lies at 1092 to 1108 (CKDCGMMSSTSKKCHHC).

It belongs to the RNA polymerase beta chain family.

It carries out the reaction RNA(n) + a ribonucleoside 5'-triphosphate = RNA(n+1) + diphosphate. Its function is as follows. Component of the DNA-dependent RNA polymerase that catalyzes the transcription of DNA into RNA using the four ribonucleoside triphosphates as substrates. Second largest component of RNA polymerase II which synthesizes mRNA precursors and many functional non-coding RNAs. Proposed to contribute to the polymerase catalytic activity and forms the polymerase active center together with the largest subunit. The polypeptide is Probable DNA-directed RNA polymerase II subunit RPB2 homolog (Invertebrate iridescent virus 3 (IIV-3)).